A 138-amino-acid polypeptide reads, in one-letter code: Putative nickel-responsive regulator (138 aa).

4 residues coordinate Ni(2+): histidine 78, histidine 89, histidine 91, and cysteine 97.

Belongs to the transcriptional regulatory CopG/NikR family. Requires Ni(2+) as cofactor.

Its function is as follows. Transcriptional regulator. In Desulfovibrio desulfuricans (strain ATCC 27774 / DSM 6949 / MB), this protein is Putative nickel-responsive regulator.